Reading from the N-terminus, the 500-residue chain is NAD(P)H-quinone oxidoreductase chain 4, chloroplastic (500 aa).

The next 15 helical transmembrane spans lie at 4 to 24, 35 to 55, 87 to 107, 113 to 130, 134 to 154, 167 to 187, 211 to 231, 242 to 262, 272 to 292, 305 to 325, 330 to 350, 364 to 384, 386 to 406, 411 to 431, and 462 to 482; these read FPWL…MLFL, YTIC…CYNF, IGTI…AFPV, LFHF…GSFS, LLLF…LLAM, FILY…GISL, ILFY…IPLH, HYST…YGLV, AHSM…IYAA, IAYS…SITD, GAIL…FLAG, MGGM…LSMA, LALP…GIIT, FLIF…LTPI, and LFLS…PDFV.

Belongs to the complex I subunit 4 family.

Its subcellular location is the plastid. The protein localises to the chloroplast thylakoid membrane. The catalysed reaction is a plastoquinone + NADH + (n+1) H(+)(in) = a plastoquinol + NAD(+) + n H(+)(out). It catalyses the reaction a plastoquinone + NADPH + (n+1) H(+)(in) = a plastoquinol + NADP(+) + n H(+)(out). This Capsella bursa-pastoris (Shepherd's purse) protein is NAD(P)H-quinone oxidoreductase chain 4, chloroplastic.